The chain runs to 530 residues: Autoinducer-2 kinase (530 aa).

This sequence belongs to the FGGY kinase family.

It is found in the cytoplasm. It carries out the reaction (S)-4,5-dihydroxypentane-2,3-dione + ATP = (2S)-2-hydroxy-3,4-dioxopentyl phosphate + ADP + H(+). Its function is as follows. Catalyzes the phosphorylation of autoinducer-2 (AI-2) to phospho-AI-2, which subsequently inactivates the transcriptional regulator LsrR and leads to the transcription of the lsr operon. Phosphorylates the ring-open form of (S)-4,5-dihydroxypentane-2,3-dione (DPD), which is the precursor to all AI-2 signaling molecules, at the C5 position. This is Autoinducer-2 kinase from Yersinia pseudotuberculosis serotype O:1b (strain IP 31758).